We begin with the raw amino-acid sequence, 163 residues long: Phosphopantetheine adenylyltransferase (163 aa).

T10 contributes to the substrate binding site. ATP-binding positions include 10 to 11 (TF) and H18. Residues K42, L74, and R88 each coordinate substrate. ATP-binding positions include 89-91 (GLR), E99, and 124-130 (NSFISST).

This sequence belongs to the bacterial CoaD family. In terms of assembly, homohexamer. It depends on Mg(2+) as a cofactor.

It localises to the cytoplasm. The enzyme catalyses (R)-4'-phosphopantetheine + ATP + H(+) = 3'-dephospho-CoA + diphosphate. It functions in the pathway cofactor biosynthesis; coenzyme A biosynthesis; CoA from (R)-pantothenate: step 4/5. Reversibly transfers an adenylyl group from ATP to 4'-phosphopantetheine, yielding dephospho-CoA (dPCoA) and pyrophosphate. In Shewanella baltica (strain OS195), this protein is Phosphopantetheine adenylyltransferase.